A 188-amino-acid chain; its full sequence is Mitochondrial import inner membrane translocase subunit Tim23B (188 aa).

Helical transmembrane passes span Phe73–Met93 and Ala125–Ile145.

Belongs to the Tim17/Tim22/Tim23 family.

It is found in the mitochondrion inner membrane. Functionally, may participate in the translocation of transit peptide-containing proteins across the mitochondrial inner membrane. the PAM complex. The chain is Mitochondrial import inner membrane translocase subunit Tim23B from Homo sapiens (Human).